The following is a 420-amino-acid chain: Histidine--tRNA ligase (420 aa).

This sequence belongs to the class-II aminoacyl-tRNA synthetase family. In terms of assembly, homodimer.

Its subcellular location is the cytoplasm. The enzyme catalyses tRNA(His) + L-histidine + ATP = L-histidyl-tRNA(His) + AMP + diphosphate + H(+). The chain is Histidine--tRNA ligase from Anaplasma phagocytophilum (strain HZ).